The sequence spans 417 residues: uncharacterized protein (417 aa).

Residues Met-1 to Pro-24 are disordered. Transmembrane regions (helical) follow at residues Val-54–Ala-74, Leu-79–Ile-99, Ala-117–Val-137, and Met-143–Met-163. Over residues Asp-211–Asp-228 the composition is skewed to basic and acidic residues. Disordered regions lie at residues Asp-211–Asp-283 and Ile-308–Lys-417. The segment covering Ser-312–Thr-322 has biased composition (polar residues). Over residues Glu-336 to Arg-347 the composition is skewed to low complexity. Residues Ser-391–Phe-401 are compositionally biased toward polar residues.

This sequence belongs to the chlamydial CPn_0443/CT_005/TC_0273 family.

It localises to the cell membrane. This is an uncharacterized protein from Chlamydia pneumoniae (Chlamydophila pneumoniae).